A 140-amino-acid chain; its full sequence is Lymphocyte antigen 6L (140 aa).

A signal peptide spans 1-20 (MAPLLLVLWASLVSMELTGG). Residues 31-124 (LSCFECFKVL…GSWEGFWSLP (94 aa)) enclose the UPAR/Ly6 domain. 2 disulfides stabilise this stretch: cysteine 33-cysteine 50 and cysteine 105-cysteine 110. Residue serine 116 is the site of GPI-anchor amidated serine attachment. A propeptide spans 117–140 (WEGFWSLPGRLLLPMGLGLFCTLL) (removed in mature form).

The protein resides in the cell membrane. The sequence is that of Lymphocyte antigen 6L from Mus musculus (Mouse).